We begin with the raw amino-acid sequence, 203 residues long: 22.3 kDa class VI heat shock protein (203 aa).

The sHSP domain maps to 86 to 203 (ALRRGARTTV…DAHQAAAATA (118 aa)).

This sequence belongs to the small heat shock protein (HSP20) family. In terms of assembly, may form oligomeric structures.

The protein resides in the cytoplasm. This Oryza sativa subsp. japonica (Rice) protein is 22.3 kDa class VI heat shock protein (HSP22.3).